Consider the following 729-residue polypeptide: E3 ubiquitin-protein ligase Trim36 (729 aa).

Residues 33 to 84 form an RING-type; degenerate zinc finger; sequence CPACKELFTHPLILPCQHSVCHKCVKELLLSLDDSFNDVASDSSNQSSPRLR. 2 consecutive B box-type zinc fingers follow at residues 154–192 and 207–249; these read AIMCDLCKPPPQESTKSCMDCSASYCNECFKIYHPWGTV and PKVL…VTTM. Positions 212, 215, 235, and 241 each coordinate Zn(2+). Positions 271-302 form a coiled coil; the sequence is ESQVKSQISELNLLMKETECNGERAKEEALAH. Residues 356 to 413 enclose the COS domain; the sequence is LKETDQSCFVQTAKQLHLRIQKATESLKSFRPAAQASFEDYVVNISKQTEVLGELSFF. In terms of domain architecture, Fibronectin type-III spans 416–511; sequence GIDIPEINEE…RELILHTPPA (96 aa). Residues 509 to 723 enclose the B30.2/SPRY domain; sequence PPAPVFSFLF…LEEAITAKYL (215 aa). The tract at residues 606–626 is disordered; that stretch reads RDAASPRYEQDSGHDSGSEDA. Residues 613–622 are compositionally biased toward basic and acidic residues; the sequence is YEQDSGHDSG.

Belongs to the TRIM/RBCC family. Interacts with CENPH. Expressed in testis. Strongly expressed in the neural tube region in 14.5 dpc embryos.

The protein localises to the cytoplasm. The protein resides in the cytoplasmic vesicle. Its subcellular location is the secretory vesicle. It is found in the acrosome. It localises to the cytoskeleton. The catalysed reaction is S-ubiquitinyl-[E2 ubiquitin-conjugating enzyme]-L-cysteine + [acceptor protein]-L-lysine = [E2 ubiquitin-conjugating enzyme]-L-cysteine + N(6)-ubiquitinyl-[acceptor protein]-L-lysine.. In terms of biological role, E3 ubiquitin-protein ligase which mediates ubiquitination and subsequent proteasomal degradation of target proteins. Involved in chromosome segregation and cell cycle regulation. May play a role in the acrosome reaction and fertilization. In Mus musculus (Mouse), this protein is E3 ubiquitin-protein ligase Trim36 (Trim36).